Here is a 312-residue protein sequence, read N- to C-terminus: tRNA uridine(34) hydroxylase (312 aa).

In terms of domain architecture, Rhodanese spans 130 to 225 (RGDEVVFFDG…YGEKFGNQGL (96 aa)). The active-site Cysteine persulfide intermediate is C185.

It belongs to the TrhO family.

It carries out the reaction uridine(34) in tRNA + AH2 + O2 = 5-hydroxyuridine(34) in tRNA + A + H2O. Its function is as follows. Catalyzes oxygen-dependent 5-hydroxyuridine (ho5U) modification at position 34 in tRNAs. The chain is tRNA uridine(34) hydroxylase from Corynebacterium efficiens (strain DSM 44549 / YS-314 / AJ 12310 / JCM 11189 / NBRC 100395).